Reading from the N-terminus, the 254-residue chain is tRNA (guanine-N(1)-)-methyltransferase (254 aa).

S-adenosyl-L-methionine contacts are provided by residues Gly117 and 136-141; that span reads LGDFVL.

This sequence belongs to the RNA methyltransferase TrmD family. As to quaternary structure, homodimer.

Its subcellular location is the cytoplasm. It catalyses the reaction guanosine(37) in tRNA + S-adenosyl-L-methionine = N(1)-methylguanosine(37) in tRNA + S-adenosyl-L-homocysteine + H(+). Its function is as follows. Specifically methylates guanosine-37 in various tRNAs. This Levilactobacillus brevis (strain ATCC 367 / BCRC 12310 / CIP 105137 / JCM 1170 / LMG 11437 / NCIMB 947 / NCTC 947) (Lactobacillus brevis) protein is tRNA (guanine-N(1)-)-methyltransferase.